The chain runs to 98 residues: Small ribosomal subunit protein uS17 (98 aa).

It belongs to the universal ribosomal protein uS17 family. Part of the 30S ribosomal subunit.

In terms of biological role, one of the primary rRNA binding proteins, it binds specifically to the 5'-end of 16S ribosomal RNA. The sequence is that of Small ribosomal subunit protein uS17 from Leptothrix cholodnii (strain ATCC 51168 / LMG 8142 / SP-6) (Leptothrix discophora (strain SP-6)).